The primary structure comprises 304 residues: Protoheme IX farnesyltransferase 1 (304 aa).

8 helical membrane passes run 24–44 (VVVLMLITSLIGMLLATKAPL), 47–67 (FVPWQVLIFGNLGIGLCAGAA), 99–119 (MALGFALLLALAGMAVLLAFT), 122–142 (LTAWLTLASLLGYAALYTGFL), 150–170 (IVIGGLAGAAPPLLGWVAITG), 176–196 (PLLLVLIIFAWTPPHFWALCI), 228–248 (LVLFAVSLMPFVIHMSGLVYL), and 280–300 (YSIVYLFLLFMALLVDHYLPL).

Belongs to the UbiA prenyltransferase family. Protoheme IX farnesyltransferase subfamily.

The protein localises to the cell inner membrane. It carries out the reaction heme b + (2E,6E)-farnesyl diphosphate + H2O = Fe(II)-heme o + diphosphate. It participates in porphyrin-containing compound metabolism; heme O biosynthesis; heme O from protoheme: step 1/1. Its function is as follows. Converts heme B (protoheme IX) to heme O by substitution of the vinyl group on carbon 2 of heme B porphyrin ring with a hydroxyethyl farnesyl side group. The chain is Protoheme IX farnesyltransferase 1 from Pseudomonas aeruginosa (strain UCBPP-PA14).